The sequence spans 266 residues: Thymidylate synthase (266 aa).

Arginine 24 is a dUMP binding site. Residue histidine 54 participates in (6R)-5,10-methylene-5,6,7,8-tetrahydrofolate binding. 129-130 (RR) contacts dUMP. The active-site Nucleophile is the cysteine 149. DUMP is bound by residues 169-172 (RSAD), asparagine 180, and 210-212 (HIY). Position 172 (aspartate 172) interacts with (6R)-5,10-methylene-5,6,7,8-tetrahydrofolate. Alanine 265 contributes to the (6R)-5,10-methylene-5,6,7,8-tetrahydrofolate binding site.

The protein belongs to the thymidylate synthase family. Bacterial-type ThyA subfamily. In terms of assembly, homodimer.

Its subcellular location is the cytoplasm. The catalysed reaction is dUMP + (6R)-5,10-methylene-5,6,7,8-tetrahydrofolate = 7,8-dihydrofolate + dTMP. It participates in pyrimidine metabolism; dTTP biosynthesis. Its function is as follows. Catalyzes the reductive methylation of 2'-deoxyuridine-5'-monophosphate (dUMP) to 2'-deoxythymidine-5'-monophosphate (dTMP) while utilizing 5,10-methylenetetrahydrofolate (mTHF) as the methyl donor and reductant in the reaction, yielding dihydrofolate (DHF) as a by-product. This enzymatic reaction provides an intracellular de novo source of dTMP, an essential precursor for DNA biosynthesis. This chain is Thymidylate synthase, found in Mycolicibacterium paratuberculosis (strain ATCC BAA-968 / K-10) (Mycobacterium paratuberculosis).